We begin with the raw amino-acid sequence, 209 residues long: Ras-like protein (209 aa).

15–22 lines the GTP pocket; that stretch reads GGGGEGKS. The short motif at 37-45 is the Effector region element; the sequence is YDPTIEESY. GTP contacts are provided by residues 62-66 and 121-124; these read DTAGQ and NKCD. Residues cysteine 202 and cysteine 203 are each lipidated (S-palmitoyl cysteine). Cysteine 206 carries the cysteine methyl ester modification. Cysteine 206 is lipidated: S-geranylgeranyl cysteine. Residues 207–209 constitute a propeptide, removed in mature form; the sequence is IVM.

This sequence belongs to the small GTPase superfamily. Ras family.

It localises to the cell membrane. The enzyme catalyses GTP + H2O = GDP + phosphate + H(+). With respect to regulation, alternates between an inactive form bound to GDP and an active form bound to GTP. Activated by a guanine nucleotide-exchange factor (GEF) and inactivated by a GTPase-activating protein (GAP). This Laccaria bicolor (Bicoloured deceiver) protein is Ras-like protein.